Consider the following 186-residue polypeptide: UPF0301 protein Tgr7_2910 (186 aa).

The protein belongs to the UPF0301 (AlgH) family.

The protein is UPF0301 protein Tgr7_2910 of Thioalkalivibrio sulfidiphilus (strain HL-EbGR7).